We begin with the raw amino-acid sequence, 339 residues long: Phosphate acyltransferase (339 aa).

The protein belongs to the PlsX family. Homodimer. Probably interacts with PlsY.

The protein resides in the cytoplasm. It carries out the reaction a fatty acyl-[ACP] + phosphate = an acyl phosphate + holo-[ACP]. It functions in the pathway lipid metabolism; phospholipid metabolism. Functionally, catalyzes the reversible formation of acyl-phosphate (acyl-PO(4)) from acyl-[acyl-carrier-protein] (acyl-ACP). This enzyme utilizes acyl-ACP as fatty acyl donor, but not acyl-CoA. The polypeptide is Phosphate acyltransferase (Brachyspira hyodysenteriae (strain ATCC 49526 / WA1)).